The chain runs to 102 residues: Small ribosomal subunit protein eS24 (102 aa).

The protein belongs to the eukaryotic ribosomal protein eS24 family.

The sequence is that of Small ribosomal subunit protein eS24 from Methanococcus maripaludis (strain DSM 14266 / JCM 13030 / NBRC 101832 / S2 / LL).